The chain runs to 154 residues: Fimbrial protein (154 aa).

Positions 1–6 are cleaved as a propeptide — leader sequence; that stretch reads MKAQKG. An N-methylphenylalanine modification is found at Phe7. The chain crosses the membrane as a helical span at residues 7–27; sequence FTLIELMIVVAIIGILAAIAI. The cysteines at positions 133 and 151 are disulfide-linked.

This sequence belongs to the N-Me-Phe pilin family. In terms of assembly, the pili are polar flexible filaments of about 5.4 nanometers diameter and 2.5 micrometers average length; they consist of only a single polypeptide chain arranged in a helical configuration of five subunits per turn in the assembled pilus.

Its subcellular location is the fimbrium. It is found in the membrane. This is Fimbrial protein (pilA) from Pseudomonas aeruginosa.